The sequence spans 493 residues: 3-octaprenyl-4-hydroxybenzoate carboxy-lyase (493 aa).

Position 172 (N172) interacts with Mn(2+). Residues 175–177 (IYR), 189–191 (RWL), and 194–195 (RG) each bind prenylated FMN. E238 lines the Mn(2+) pocket. D287 acts as the Proton donor in catalysis.

The protein belongs to the UbiD family. Homohexamer. The cofactor is prenylated FMN. Requires Mn(2+) as cofactor.

It is found in the cell membrane. It catalyses the reaction a 4-hydroxy-3-(all-trans-polyprenyl)benzoate + H(+) = a 2-(all-trans-polyprenyl)phenol + CO2. Its pathway is cofactor biosynthesis; ubiquinone biosynthesis. Functionally, catalyzes the decarboxylation of 3-octaprenyl-4-hydroxy benzoate to 2-octaprenylphenol, an intermediate step in ubiquinone biosynthesis. This is 3-octaprenyl-4-hydroxybenzoate carboxy-lyase from Shewanella amazonensis (strain ATCC BAA-1098 / SB2B).